The chain runs to 141 residues: Putative pre-16S rRNA nuclease (141 aa).

It belongs to the YqgF nuclease family.

It is found in the cytoplasm. Could be a nuclease involved in processing of the 5'-end of pre-16S rRNA. The protein is Putative pre-16S rRNA nuclease of Aliivibrio fischeri (strain MJ11) (Vibrio fischeri).